The chain runs to 521 residues: Cytochrome P450 52A9 (521 aa).

Heme is bound at residue Cys-468.

This sequence belongs to the cytochrome P450 family. It depends on heme as a cofactor.

Its subcellular location is the membrane. Its function is as follows. Together with an NADPH cytochrome P450 the enzyme system catalyzes the terminal hydroxylation as the first step in the assimilation of alkanes and fatty acids. This chain is Cytochrome P450 52A9 (CYP52A9), found in Candida maltosa (Yeast).